A 396-amino-acid chain; its full sequence is Elongation factor Tu (396 aa).

The tr-type G domain maps to K11–E205. Positions G20 to T27 are G1. G20–T27 is a binding site for GTP. T27 lines the Mg(2+) pocket. The G2 stretch occupies residues G61–N65. A G3 region spans residues D82–G85. GTP-binding positions include D82–H86 and N137–D140. The interval N137–D140 is G4. Positions S175 to L177 are G5.

This sequence belongs to the TRAFAC class translation factor GTPase superfamily. Classic translation factor GTPase family. EF-Tu/EF-1A subfamily. In terms of assembly, monomer.

The protein localises to the cytoplasm. The enzyme catalyses GTP + H2O = GDP + phosphate + H(+). In terms of biological role, GTP hydrolase that promotes the GTP-dependent binding of aminoacyl-tRNA to the A-site of ribosomes during protein biosynthesis. The polypeptide is Elongation factor Tu (Lactobacillus johnsonii (strain CNCM I-12250 / La1 / NCC 533)).